The following is a 144-amino-acid chain: 3-dehydroquinate dehydratase (144 aa).

Tyrosine 24 functions as the Proton acceptor in the catalytic mechanism. The substrate site is built by asparagine 73, histidine 79, and aspartate 86. The active-site Proton donor is the histidine 99. Substrate-binding positions include 100–101 (LS) and arginine 110.

It belongs to the type-II 3-dehydroquinase family. As to quaternary structure, homododecamer.

It carries out the reaction 3-dehydroquinate = 3-dehydroshikimate + H2O. Its pathway is metabolic intermediate biosynthesis; chorismate biosynthesis; chorismate from D-erythrose 4-phosphate and phosphoenolpyruvate: step 3/7. In terms of biological role, catalyzes a trans-dehydration via an enolate intermediate. This Shewanella sp. (strain MR-4) protein is 3-dehydroquinate dehydratase.